The following is a 317-amino-acid chain: Ribosomal protein L11 methyltransferase (317 aa).

The S-adenosyl-L-methionine site is built by Thr139, Gly162, Asp184, and Asn226. The disordered stretch occupies residues Glu274–Gly297.

It belongs to the methyltransferase superfamily. PrmA family.

The protein resides in the cytoplasm. The enzyme catalyses L-lysyl-[protein] + 3 S-adenosyl-L-methionine = N(6),N(6),N(6)-trimethyl-L-lysyl-[protein] + 3 S-adenosyl-L-homocysteine + 3 H(+). In terms of biological role, methylates ribosomal protein L11. This Sorangium cellulosum (strain So ce56) (Polyangium cellulosum (strain So ce56)) protein is Ribosomal protein L11 methyltransferase.